Consider the following 209-residue polypeptide: Virulence factors putative positive transcription regulator BvgA (209 aa).

The Response regulatory domain occupies 4-119 (KVLIIDDHPV…EVINAAKAVM (116 aa)). Aspartate 54 is subject to 4-aspartylphosphate. Residues 142–207 (DSTLISVLSN…ELIDLAKRNN (66 aa)) form the HTH luxR-type domain. Residues 166-185 (NKDIADSMFLSNKTVSTYKT) constitute a DNA-binding region (H-T-H motif).

As to quaternary structure, homodimer. Post-translationally, phosphorylated by BvgS.

In terms of biological role, member of the two-component regulatory system BvgS/BvgA. Activates the transcription of virulence genes. This is Virulence factors putative positive transcription regulator BvgA (bvgA) from Bordetella bronchiseptica (strain ATCC BAA-588 / NCTC 13252 / RB50) (Alcaligenes bronchisepticus).